A 218-amino-acid chain; its full sequence is MESENAEAENVVTGNLEAKSKEGKNMQFVTLSSAWSLQALSSLLNPEEEDGFDFEQGQCSFTIGAMGPGNIGPPKAKESKAIPEPRSDESENIWNPEEVPEGAEHDDIWDVREIPDYEIVFQQTVGTEDVYLGLTRKDPSTACCQELVVKIKLPNTNPSEIQIDIQEMLLDLRTPRKKLLVNFPQPVERNSARASYIWEAETLEVRMTVQRDLDFNIS.

A disordered region spans residues 66–103; it reads MGPGNIGPPKAKESKAIPEPRSDESENIWNPEEVPEGA. Over residues 75–89 the composition is skewed to basic and acidic residues; that stretch reads KAKESKAIPEPRSDE.

The protein belongs to the PIH1 family. In terms of assembly, interacts with HSPA1A/B, HSP90AA1 and DNAI2. Interacts with DNAAF2 and DNAAF4. In terms of tissue distribution, specifically expressed in testis. Detected in pachytene spermatocytes from 5 weeks of age and in pachytene and diplotene spermatocytes of adult mice. Not detected in spermatids or mature sperm.

The protein localises to the cytoplasm. Its subcellular location is the golgi apparatus. It localises to the trans-Golgi network. In terms of biological role, plays a role in cytoplasmic pre-assembly of axonemal dynein. This chain is Dynein axonemal assembly factor 6, found in Mus musculus (Mouse).